A 489-amino-acid polypeptide reads, in one-letter code: Cobyric acid synthase (489 aa).

In terms of domain architecture, GATase cobBQ-type spans Ala247 to Ala439. The active-site Nucleophile is the Cys328. His431 is a catalytic residue.

This sequence belongs to the CobB/CobQ family. CobQ subfamily.

The protein operates within cofactor biosynthesis; adenosylcobalamin biosynthesis. In terms of biological role, catalyzes amidations at positions B, D, E, and G on adenosylcobyrinic A,C-diamide. NH(2) groups are provided by glutamine, and one molecule of ATP is hydrogenolyzed for each amidation. This chain is Cobyric acid synthase, found in Marinobacter nauticus (strain ATCC 700491 / DSM 11845 / VT8) (Marinobacter aquaeolei).